The following is a 382-amino-acid chain: Lipid-A-disaccharide synthase (382 aa).

This sequence belongs to the LpxB family.

It carries out the reaction 2-N,3-O-bis[(3R)-3-hydroxytetradecanoyl]-alpha-D-glucosaminyl 1-phosphate + UDP-2-N,3-O-bis[(3R)-3-hydroxytetradecanoyl]-alpha-D-glucosamine = lipid A disaccharide (E. coli) + UDP + H(+). The catalysed reaction is a lipid X + a UDP-2-N,3-O-bis[(3R)-3-hydroxyacyl]-alpha-D-glucosamine = a lipid A disaccharide + UDP + H(+). It functions in the pathway glycolipid biosynthesis; lipid IV(A) biosynthesis; lipid IV(A) from (3R)-3-hydroxytetradecanoyl-[acyl-carrier-protein] and UDP-N-acetyl-alpha-D-glucosamine: step 5/6. Functionally, condensation of UDP-2,3-diacylglucosamine and 2,3-diacylglucosamine-1-phosphate to form lipid A disaccharide, a precursor of lipid A, a phosphorylated glycolipid that anchors the lipopolysaccharide to the outer membrane of the cell. In Shigella flexneri, this protein is Lipid-A-disaccharide synthase.